The following is a 322-amino-acid chain: Ribose-phosphate pyrophosphokinase (322 aa).

ATP contacts are provided by residues 43–45 (DGE) and 102–103 (RQ). Mg(2+) contacts are provided by His-137 and Asp-177. Lys-201 is a catalytic residue. Residues Arg-203, Asp-227, and 231-235 (DTAGT) each bind D-ribose 5-phosphate.

This sequence belongs to the ribose-phosphate pyrophosphokinase family. Class I subfamily. In terms of assembly, homohexamer. Mg(2+) is required as a cofactor.

It is found in the cytoplasm. It carries out the reaction D-ribose 5-phosphate + ATP = 5-phospho-alpha-D-ribose 1-diphosphate + AMP + H(+). Its pathway is metabolic intermediate biosynthesis; 5-phospho-alpha-D-ribose 1-diphosphate biosynthesis; 5-phospho-alpha-D-ribose 1-diphosphate from D-ribose 5-phosphate (route I): step 1/1. In terms of biological role, involved in the biosynthesis of the central metabolite phospho-alpha-D-ribosyl-1-pyrophosphate (PRPP) via the transfer of pyrophosphoryl group from ATP to 1-hydroxyl of ribose-5-phosphate (Rib-5-P). This chain is Ribose-phosphate pyrophosphokinase, found in Xylella fastidiosa (strain 9a5c).